The chain runs to 637 residues: 1-deoxy-D-xylulose-5-phosphate synthase (637 aa).

Thiamine diphosphate-binding positions include His-75 and 116 to 118 (AHS). A Mg(2+)-binding site is contributed by Asp-147. Thiamine diphosphate contacts are provided by residues 148 to 149 (GA), Asn-177, Tyr-288, and Glu-370. Residue Asn-177 coordinates Mg(2+).

This sequence belongs to the transketolase family. DXPS subfamily. Homodimer. The cofactor is Mg(2+). Thiamine diphosphate is required as a cofactor.

It carries out the reaction D-glyceraldehyde 3-phosphate + pyruvate + H(+) = 1-deoxy-D-xylulose 5-phosphate + CO2. The protein operates within metabolic intermediate biosynthesis; 1-deoxy-D-xylulose 5-phosphate biosynthesis; 1-deoxy-D-xylulose 5-phosphate from D-glyceraldehyde 3-phosphate and pyruvate: step 1/1. Functionally, catalyzes the acyloin condensation reaction between C atoms 2 and 3 of pyruvate and glyceraldehyde 3-phosphate to yield 1-deoxy-D-xylulose-5-phosphate (DXP). This Cupriavidus metallidurans (strain ATCC 43123 / DSM 2839 / NBRC 102507 / CH34) (Ralstonia metallidurans) protein is 1-deoxy-D-xylulose-5-phosphate synthase.